Reading from the N-terminus, the 651-residue chain is Bromodomain-containing protein 7 (651 aa).

Disordered regions lie at residues 36–133 (ELST…EVEQ) and 257–298 (KDKV…KKKD). The span at 58 to 69 (HKDRKRKKRKKG) shows a compositional bias: basic residues. The Nuclear localization signal motif lies at 65 to 96 (KRKKGEKQVPGEEKEKRKRKVKEDKRKRDREH). Positions 70-105 (EKQVPGEEKEKRKRKVKEDKRKRDREHPDSEGEQEL) are enriched in basic and acidic residues. The Bromo domain occupies 131 to 235 (VEQTPLQEAL…HSGMKILSQE (105 aa)). Positions 271–298 (GSGKDKGEPVDGDTKAFKTPNKEHKKKD) are enriched in basic and acidic residues. Residues 533-564 (SEEAEIFQRKLDETTKLLRELQDAQNERLSTK) are a coiled coil.

Its subcellular location is the nucleus. It is found in the chromosome. Its function is as follows. Acts both as coactivator and as corepressor. May play a role in chromatin remodeling. Participates in the Wnt signaling pathway. Transcriptional corepressor that down-regulates the expression of target genes. Binds to target promoters, leading to increased histone H3 acetylation. Coactivator for TP53-mediated activation of transcription of a set of target genes. Required for TP53-mediated cell-cycle arrest in response to oncogene activation. Inhibits cell cycle progression from G1 to S phase. In Gallus gallus (Chicken), this protein is Bromodomain-containing protein 7 (BRD7).